The primary structure comprises 450 residues: Sulfite exporter TauE/SafE family protein 1 (450 aa).

12 helical membrane passes run 5–25 (LVPL…SALA), 48–68 (TIEV…AASI), 70–90 (SAGG…IAGL), 97–117 (SFSA…NLFL), 130–150 (FDLA…GVIC), 153–173 (MFPN…STMK), 223–243 (FPWM…SINL), 261–281 (ALYW…TLCI), 316–336 (VMAL…GMLI), 340–360 (LLQI…MVLF), 378–398 (GTAA…LMVV), and 408–428 (ASII…LMTT).

Belongs to the 4-toluene sulfonate uptake permease (TSUP) (TC 2.A.102) family.

It localises to the membrane. This chain is Sulfite exporter TauE/SafE family protein 1, found in Arabidopsis thaliana (Mouse-ear cress).